A 214-amino-acid chain; its full sequence is Thiamine-phosphate synthase (214 aa).

Residues 37–41 (QYREK) and asparagine 73 contribute to the 4-amino-2-methyl-5-(diphosphooxymethyl)pyrimidine site. 2 residues coordinate Mg(2+): aspartate 74 and aspartate 93. A 4-amino-2-methyl-5-(diphosphooxymethyl)pyrimidine-binding site is contributed by serine 112. 139-141 (TIS) provides a ligand contact to 2-[(2R,5Z)-2-carboxy-4-methylthiazol-5(2H)-ylidene]ethyl phosphate. Lysine 142 contributes to the 4-amino-2-methyl-5-(diphosphooxymethyl)pyrimidine binding site. 2-[(2R,5Z)-2-carboxy-4-methylthiazol-5(2H)-ylidene]ethyl phosphate contacts are provided by residues glycine 171 and 191–192 (IS).

This sequence belongs to the thiamine-phosphate synthase family. Mg(2+) is required as a cofactor.

It carries out the reaction 2-[(2R,5Z)-2-carboxy-4-methylthiazol-5(2H)-ylidene]ethyl phosphate + 4-amino-2-methyl-5-(diphosphooxymethyl)pyrimidine + 2 H(+) = thiamine phosphate + CO2 + diphosphate. It catalyses the reaction 2-(2-carboxy-4-methylthiazol-5-yl)ethyl phosphate + 4-amino-2-methyl-5-(diphosphooxymethyl)pyrimidine + 2 H(+) = thiamine phosphate + CO2 + diphosphate. The catalysed reaction is 4-methyl-5-(2-phosphooxyethyl)-thiazole + 4-amino-2-methyl-5-(diphosphooxymethyl)pyrimidine + H(+) = thiamine phosphate + diphosphate. Its pathway is cofactor biosynthesis; thiamine diphosphate biosynthesis; thiamine phosphate from 4-amino-2-methyl-5-diphosphomethylpyrimidine and 4-methyl-5-(2-phosphoethyl)-thiazole: step 1/1. In terms of biological role, condenses 4-methyl-5-(beta-hydroxyethyl)thiazole monophosphate (THZ-P) and 2-methyl-4-amino-5-hydroxymethyl pyrimidine pyrophosphate (HMP-PP) to form thiamine monophosphate (TMP). This Listeria monocytogenes serotype 4a (strain HCC23) protein is Thiamine-phosphate synthase.